The primary structure comprises 475 residues: ATP synthase subunit beta (475 aa).

160 to 167 (GGAGVGKT) is an ATP binding site.

The protein belongs to the ATPase alpha/beta chains family. In terms of assembly, F-type ATPases have 2 components, CF(1) - the catalytic core - and CF(0) - the membrane proton channel. CF(1) has five subunits: alpha(3), beta(3), gamma(1), delta(1), epsilon(1). CF(0) has three main subunits: a(1), b(2) and c(9-12). The alpha and beta chains form an alternating ring which encloses part of the gamma chain. CF(1) is attached to CF(0) by a central stalk formed by the gamma and epsilon chains, while a peripheral stalk is formed by the delta and b chains.

It is found in the cell membrane. The enzyme catalyses ATP + H2O + 4 H(+)(in) = ADP + phosphate + 5 H(+)(out). Functionally, produces ATP from ADP in the presence of a proton gradient across the membrane. The catalytic sites are hosted primarily by the beta subunits. This chain is ATP synthase subunit beta, found in Mycolicibacterium vanbaalenii (strain DSM 7251 / JCM 13017 / BCRC 16820 / KCTC 9966 / NRRL B-24157 / PYR-1) (Mycobacterium vanbaalenii).